The primary structure comprises 178 residues: Inner membrane-spanning protein YciB (178 aa).

6 helical membrane passes run 1–21, 23–43, 51–71, 77–97, 120–140, and 150–170; these read MKIL…KMTG, IIIA…FTWF, MHLV…LLGD, WKPT…QFIG, LNLA…YVAF, and FKLF…GIYL.

Belongs to the YciB family.

The protein resides in the cell inner membrane. Its function is as follows. Plays a role in cell envelope biogenesis, maintenance of cell envelope integrity and membrane homeostasis. The chain is Inner membrane-spanning protein YciB from Marinomonas sp. (strain MWYL1).